Consider the following 109-residue polypeptide: Small ribosomal subunit protein uS10 (109 aa).

This sequence belongs to the universal ribosomal protein uS10 family. In terms of assembly, part of the 30S ribosomal subunit.

Its function is as follows. Involved in the binding of tRNA to the ribosomes. The polypeptide is Small ribosomal subunit protein uS10 (Koribacter versatilis (strain Ellin345)).